Here is a 279-residue protein sequence, read N- to C-terminus: MAAPVRRTLLGVAGGWRRFERLRAGSLSSRSLALAAAPSSNGSPWRLLGALCLQRPPAVSKPLTPFQEEMASLLQQIEIERSLYSDHELRALDENQRLAGKKADLYDEEDEEDILLAQDLEDMWEQTFLQFKLGARITEADEKNDRTSLNRKLDRNLVLLVREKFGDQDVWILPQTEWQPGETLRGTAERTLATLSENNMEAKFLGNAPCGHYTFKFPQAMRTESNLGAKVFFFKALLLTGDFSQAGNKGHHVWVTKDELGDYLKPKYLAQVRRFLSDL.

Residue Lys-230 is modified to N6-acetyllysine.

The protein belongs to the mitochondrion-specific ribosomal protein mL46 family. As to quaternary structure, component of the mitochondrial ribosome large subunit (39S) which comprises a 16S rRNA and about 50 distinct proteins.

It localises to the mitochondrion. The chain is Large ribosomal subunit protein mL46 (MRPL46) from Pongo abelii (Sumatran orangutan).